The following is a 338-amino-acid chain: Lipoate-protein ligase A (338 aa).

Positions 29 to 216 (PATQRVLFLW…AFFAHYGERV (188 aa)) constitute a BPL/LPL catalytic domain. Residues R71, 76–79 (GAVF), and K134 contribute to the ATP site. K134 contacts (R)-lipoate.

The protein belongs to the LplA family. As to quaternary structure, monomer.

The protein resides in the cytoplasm. It catalyses the reaction L-lysyl-[lipoyl-carrier protein] + (R)-lipoate + ATP = N(6)-[(R)-lipoyl]-L-lysyl-[lipoyl-carrier protein] + AMP + diphosphate + H(+). The protein operates within protein modification; protein lipoylation via exogenous pathway; protein N(6)-(lipoyl)lysine from lipoate: step 1/2. It functions in the pathway protein modification; protein lipoylation via exogenous pathway; protein N(6)-(lipoyl)lysine from lipoate: step 2/2. Functionally, catalyzes both the ATP-dependent activation of exogenously supplied lipoate to lipoyl-AMP and the transfer of the activated lipoyl onto the lipoyl domains of lipoate-dependent enzymes. The protein is Lipoate-protein ligase A of Salmonella agona (strain SL483).